The sequence spans 348 residues: Mitochondrial glycine transporter (348 aa).

3 Solcar repeats span residues 10-94 (TKST…IREN), 130-214 (LSNT…SKQH), and 249-333 (RAAS…LIRR). The next 6 helical transmembrane spans lie at 16–41 (FVAGLGSGVLSAILLQPIDLLKTRVQ), 69–95 (GTLPSALRTGFGSAIYFTTLNTIRENA), 136–161 (LLAGAVARSFAGFILMPLTVLKVRYE), 189–212 (GFGATAIRDAPYAGLYVLFYEKSK), 253–279 (INFASGVFSAIICSIISNPFDAVKTRI), and 308–326 (GLALRMSRKAMSSALAWTV).

This sequence belongs to the mitochondrial carrier (TC 2.A.29) family. SLC25A38 subfamily.

The protein resides in the mitochondrion inner membrane. It carries out the reaction glycine(in) = glycine(out). Mitochondrial glycine transporter that imports glycine into the mitochondrial matrix. Plays an important role in providing glycine for the first enzymatic step in heme biosynthesis, the condensation of glycine with succinyl-CoA to produce 5-aminolevulinate (ALA) in the mitochondrial matrix. This chain is Mitochondrial glycine transporter (mic-13), found in Neurospora crassa (strain ATCC 24698 / 74-OR23-1A / CBS 708.71 / DSM 1257 / FGSC 987).